Here is a 631-residue protein sequence, read N- to C-terminus: Fusexin 1 (631 aa).

The signal sequence occupies residues 1–19; the sequence is MRRAALILAFVLFIGLSSA. The segment at 20–90 is domain I N-terminus; it reads TVTSADSITY…THQDSKLKYS (71 aa). The Extracellular portion of the chain corresponds to 20-537; the sequence is TVTSADSITY…NLFGGSGSGD (518 aa). A domain II N-terminus region spans residues 91 to 170; sequence TSTSDELRDI…KLATPAYIDN (80 aa). The Ca(2+) site is built by aspartate 112, serine 146, tyrosine 149, and aspartate 150. Cysteine 125 and cysteine 155 are joined by a disulfide. The tract at residues 143-148 is fusion loop, required for fusogenic activity, not required for membrane surface localization; that stretch reads SVTSPV. Residues 171-224 form a domain I central section region; it reads PDEIFTAKAELQAGDKTIQSATLSNGDAGDGTVTDLGDSKISWNGNLDLGASEP. Residues 225–316 are domain II C-terminus; sequence ENSRVIALYS…KDSSLDTGSF (92 aa). The domain I C-terminus stretch occupies residues 317–348; sequence VYDTPELLSYPSFTVYVDAGENGYIEVTKPTG. The interval 349–455 is domain III; that stretch reads DPDIISTSST…SVSVTGIQQS (107 aa). 3 disulfides stabilise this stretch: cysteine 389–cysteine 432, cysteine 457–cysteine 477, and cysteine 490–cysteine 506. Positions 443 to 467 are disordered; that stretch reads DSTSVSVTGIQQSECNPGDQRREKN. Residues 456-509 are domain IV, required for fusogenic activity; that stretch reads ECNPGDQRREKNENDRWEIYTCQDNGLTYEYDVTCAEDEKAVAQGDNQFSCEKQ. The interval 510–537 is stem; it reads DDDSGGGDNTGSDSGLFSNLFGGSGSGD. Residues 538-558 form a helical membrane-spanning segment; sequence LLTQVHTALSILAGLVAGFFG. The Cytoplasmic segment spans residues 559-590; the sequence is YRGARWIHGETDIKGGFKLESRNVSRVKRGSP. Residues 591–611 form a helical membrane-spanning segment; it reads VAGIVGAVLGFVVGYGVASVF. Histidine 612 is a topological domain (extracellular). A helical transmembrane segment spans residues 613–630; sequence PVVQIIVVLGIAVGLYYF. A topological domain (cytoplasmic) is located at residue arginine 631.

The protein belongs to the HAP2/GCS1 family. Fusexin 1 subfamily. In terms of assembly, monomer in solution, crystallizes as a trimer in high salt (2.5 M NaCl, 0.2 M CaCl(2)). The trimer is stabilized by interdomain contacts and numerous Ca(2+) and Na(+) ions.

It is found in the cell surface. Its subcellular location is the cell membrane. In terms of biological role, exhibits fusogenic activity. Mediates cell-cell fusion in mammalian cells when present in both cells (bilateral fusion). This Uncultured archaeon protein is Fusexin 1.